The primary structure comprises 203 residues: Orotate phosphoribosyltransferase (203 aa).

Residues Arg94, Lys98, His100, and 120 to 128 each bind 5-phospho-alpha-D-ribose 1-diphosphate; that span reads EDLISTGGS. Ser124 lines the orotate pocket.

Belongs to the purine/pyrimidine phosphoribosyltransferase family. PyrE subfamily. Homodimer. Mg(2+) serves as cofactor.

It catalyses the reaction orotidine 5'-phosphate + diphosphate = orotate + 5-phospho-alpha-D-ribose 1-diphosphate. It functions in the pathway pyrimidine metabolism; UMP biosynthesis via de novo pathway; UMP from orotate: step 1/2. In terms of biological role, catalyzes the transfer of a ribosyl phosphate group from 5-phosphoribose 1-diphosphate to orotate, leading to the formation of orotidine monophosphate (OMP). This chain is Orotate phosphoribosyltransferase, found in Staphylococcus saprophyticus subsp. saprophyticus (strain ATCC 15305 / DSM 20229 / NCIMB 8711 / NCTC 7292 / S-41).